A 255-amino-acid chain; its full sequence is MSTNLHWQSFGQGPDLVLLHGWGMNGAVWQQTVESLQADFCVHVVDLPGYGFSAEHHGEDLAQIAAMVLKDAPEKAVWLGWSLGGLVATHIALNAPQRVSKLITVASSPKFAAEKPWRGIQPNVLSAFTSQLLEDFSLTIERFMALQAMGSPSARKDVKQLKQAVLSRPQPNPESLLVGLNILADVDLRDALISLTMPMLRLYGRLDGLVPIKVATDLSQQLPHTQQFVFSQSSHAPFMTEHDEFCAQVRDFAQD.

In terms of domain architecture, AB hydrolase-1 spans 16–241 (LVLLHGWGMN…QSSHAPFMTE (226 aa)). Substrate-binding positions include Trp-22, 82–83 (SL), and 143–147 (FMALQ). Residue Ser-82 is the Nucleophile of the active site. Catalysis depends on residues Asp-207 and His-235. His-235 contacts substrate.

This sequence belongs to the AB hydrolase superfamily. Carboxylesterase BioH family. Monomer.

The protein resides in the cytoplasm. The enzyme catalyses 6-carboxyhexanoyl-[ACP] methyl ester + H2O = 6-carboxyhexanoyl-[ACP] + methanol + H(+). Its pathway is cofactor biosynthesis; biotin biosynthesis. In terms of biological role, the physiological role of BioH is to remove the methyl group introduced by BioC when the pimeloyl moiety is complete. It allows to synthesize pimeloyl-ACP via the fatty acid synthetic pathway through the hydrolysis of the ester bonds of pimeloyl-ACP esters. This Vibrio parahaemolyticus serotype O3:K6 (strain RIMD 2210633) protein is Pimeloyl-[acyl-carrier protein] methyl ester esterase.